The primary structure comprises 352 residues: Probable cytosolic iron-sulfur protein assembly protein CIAO1 homolog (352 aa).

WD repeat units lie at residues 14–53, 63–102, 107–146, 152–191, 200–240, 268–306, and 319–352; these read GHDD…PSEQ, CHTR…WEQV, GHEN…EFEC, GHSQ…WGCA, GHES…TSTP, HHRR…LTQP, and AHGA…WWLR.

This sequence belongs to the WD repeat CIA1 family.

Functionally, essential component of the cytosolic iron-sulfur (Fe/S) protein assembly machinery. Required for the maturation of extramitochondrial Fe/S proteins. The polypeptide is Probable cytosolic iron-sulfur protein assembly protein CIAO1 homolog (Chlamydomonas reinhardtii (Chlamydomonas smithii)).